A 154-amino-acid chain; its full sequence is Acidic phospholipase A2 1 (154 aa).

The signal sequence occupies residues Met1 to Ala19. A propeptide spanning residues Ala20–Leu27 is cleaved from the precursor. Disulfide bonds link Cys38–Cys104, Cys54–Cys153, Cys56–Cys72, Cys71–Cys132, Cys78–Cys125, Cys88–Cys118, and Cys111–Cys123. Ca(2+) contacts are provided by Phe55, Gly57, and Gly59. Residue His75 is part of the active site. Asp76 lines the Ca(2+) pocket. Asp126 is a catalytic residue.

Belongs to the phospholipase A2 family. Group I subfamily. D49 sub-subfamily. In terms of assembly, monomer. The cofactor is Ca(2+). In terms of tissue distribution, expressed by the venom gland.

The protein localises to the secreted. The catalysed reaction is a 1,2-diacyl-sn-glycero-3-phosphocholine + H2O = a 1-acyl-sn-glycero-3-phosphocholine + a fatty acid + H(+). Functionally, snake venom phospholipase A2 (PLA2) that shows moderate enzymatic activity and exhibits procoagulant activity. PLA2 catalyzes the calcium-dependent hydrolysis of the 2-acyl groups in 3-sn-phosphoglycerides. The protein is Acidic phospholipase A2 1 of Pseudonaja textilis (Eastern brown snake).